We begin with the raw amino-acid sequence, 282 residues long: MYTTQDIAAIRTQVRQWKRAGETVAFVPTMGNLHQGHITLVTEALKRADHVVVSIFVNPMQFGQNEDLDAYPRTLAADQAALEAAGAELLFTPTPAIIYPKGMDKQTFVEVPGLSEELCGASRPGHFRGVATIVCKLFNIVQPDVALFGKKDFQQLMVIKAMVEDLSLPIEIVGVDTIRESSGLAMSSRNGYLSEAQKQQAAQLKRTLDEMAEAIAKGQAIPNVVRHAQEQLHQAGFKPDYLSVRNAADLREAQDSDKQLVILAAAFMGSTRLIDNLSFERA.

30–37 (MGNLHQGH) provides a ligand contact to ATP. H37 functions as the Proton donor in the catalytic mechanism. Position 61 (Q61) interacts with (R)-pantoate. Q61 is a beta-alanine binding site. Residue 149–152 (GKKD) coordinates ATP. Q155 serves as a coordination point for (R)-pantoate. ATP contacts are provided by residues I178 and 186–189 (MSSR).

This sequence belongs to the pantothenate synthetase family. As to quaternary structure, homodimer.

The protein resides in the cytoplasm. It carries out the reaction (R)-pantoate + beta-alanine + ATP = (R)-pantothenate + AMP + diphosphate + H(+). It participates in cofactor biosynthesis; (R)-pantothenate biosynthesis; (R)-pantothenate from (R)-pantoate and beta-alanine: step 1/1. In terms of biological role, catalyzes the condensation of pantoate with beta-alanine in an ATP-dependent reaction via a pantoyl-adenylate intermediate. This is Pantothenate synthetase from Shewanella loihica (strain ATCC BAA-1088 / PV-4).